Reading from the N-terminus, the 70-residue chain is DNA-directed RNA polymerase subunit omega (70 aa).

It belongs to the RNA polymerase subunit omega family. The RNAP catalytic core consists of 2 alpha, 1 beta, 1 beta' and 1 omega subunit. When a sigma factor is associated with the core the holoenzyme is formed, which can initiate transcription.

It catalyses the reaction RNA(n) + a ribonucleoside 5'-triphosphate = RNA(n+1) + diphosphate. In terms of biological role, promotes RNA polymerase assembly. Latches the N- and C-terminal regions of the beta' subunit thereby facilitating its interaction with the beta and alpha subunits. This is DNA-directed RNA polymerase subunit omega from Thermoanaerobacter pseudethanolicus (strain ATCC 33223 / 39E) (Clostridium thermohydrosulfuricum).